Reading from the N-terminus, the 1404-residue chain is DNA-directed RNA polymerase subunit beta' (1404 aa).

Residues cysteine 70, cysteine 72, cysteine 85, and cysteine 88 each contribute to the Zn(2+) site. Mg(2+) contacts are provided by aspartate 460, aspartate 462, and aspartate 464. The Zn(2+) site is built by cysteine 825, cysteine 899, cysteine 906, and cysteine 909.

This sequence belongs to the RNA polymerase beta' chain family. The RNAP catalytic core consists of 2 alpha, 1 beta, 1 beta' and 1 omega subunit. When a sigma factor is associated with the core the holoenzyme is formed, which can initiate transcription. Mg(2+) is required as a cofactor. The cofactor is Zn(2+).

It catalyses the reaction RNA(n) + a ribonucleoside 5'-triphosphate = RNA(n+1) + diphosphate. In terms of biological role, DNA-dependent RNA polymerase catalyzes the transcription of DNA into RNA using the four ribonucleoside triphosphates as substrates. In Nitrosomonas eutropha (strain DSM 101675 / C91 / Nm57), this protein is DNA-directed RNA polymerase subunit beta'.